The chain runs to 200 residues: Holliday junction branch migration complex subunit RuvA (200 aa).

Residues 1-64 (MFTYFRGELI…EDLMQLFGFL (64 aa)) are domain I. A domain II region spans residues 65–143 (EEEERQLFRL…KLRPSGGTKS (79 aa)). A flexible linker region spans residues 144 to 148 (VSRLS). The segment at 148–200 (SESSMRDDAVNALVTLGFLRSVAQKAVTESLTSLRNPQVEDLVRDALLTIRTP) is domain III.

This sequence belongs to the RuvA family. In terms of assembly, homotetramer. Forms an RuvA(8)-RuvB(12)-Holliday junction (HJ) complex. HJ DNA is sandwiched between 2 RuvA tetramers; dsDNA enters through RuvA and exits via RuvB. An RuvB hexamer assembles on each DNA strand where it exits the tetramer. Each RuvB hexamer is contacted by two RuvA subunits (via domain III) on 2 adjacent RuvB subunits; this complex drives branch migration. In the full resolvosome a probable DNA-RuvA(4)-RuvB(12)-RuvC(2) complex forms which resolves the HJ.

Its subcellular location is the cytoplasm. In terms of biological role, the RuvA-RuvB-RuvC complex processes Holliday junction (HJ) DNA during genetic recombination and DNA repair, while the RuvA-RuvB complex plays an important role in the rescue of blocked DNA replication forks via replication fork reversal (RFR). RuvA specifically binds to HJ cruciform DNA, conferring on it an open structure. The RuvB hexamer acts as an ATP-dependent pump, pulling dsDNA into and through the RuvAB complex. HJ branch migration allows RuvC to scan DNA until it finds its consensus sequence, where it cleaves and resolves the cruciform DNA. The polypeptide is Holliday junction branch migration complex subunit RuvA (Chlorobium phaeobacteroides (strain BS1)).